We begin with the raw amino-acid sequence, 416 residues long: Adenosylhomocysteinase (416 aa).

Residues Thr55, Asp126, and Glu151 each contribute to the substrate site. An NAD(+)-binding site is contributed by 152–154 (TTT). Substrate-binding residues include Lys181 and Asp185. NAD(+) is bound by residues Asn186, 215-220 (GYGWVG), Glu238, Asn273, 294-296 (AGH), and Asn341.

Belongs to the adenosylhomocysteinase family. NAD(+) serves as cofactor.

The protein resides in the cytoplasm. The catalysed reaction is S-adenosyl-L-homocysteine + H2O = L-homocysteine + adenosine. Its pathway is amino-acid biosynthesis; L-homocysteine biosynthesis; L-homocysteine from S-adenosyl-L-homocysteine: step 1/1. Its function is as follows. May play a key role in the regulation of the intracellular concentration of adenosylhomocysteine. This is Adenosylhomocysteinase from Aeropyrum pernix (strain ATCC 700893 / DSM 11879 / JCM 9820 / NBRC 100138 / K1).